The chain runs to 889 residues: Alanine--tRNA ligase (889 aa).

Zn(2+) is bound by residues histidine 587, histidine 591, cysteine 691, and histidine 695. Disordered regions lie at residues 734–760 and 866–889; these read QQEQ…EENK and AQGG…MILG. The span at 872-881 shows a compositional bias: basic and acidic residues; that stretch reads DTSKKDEAIS.

The protein belongs to the class-II aminoacyl-tRNA synthetase family. The cofactor is Zn(2+).

Its subcellular location is the cytoplasm. It carries out the reaction tRNA(Ala) + L-alanine + ATP = L-alanyl-tRNA(Ala) + AMP + diphosphate. Catalyzes the attachment of alanine to tRNA(Ala) in a two-step reaction: alanine is first activated by ATP to form Ala-AMP and then transferred to the acceptor end of tRNA(Ala). Also edits incorrectly charged Ser-tRNA(Ala) and Gly-tRNA(Ala) via its editing domain. The sequence is that of Alanine--tRNA ligase from Nitrosopumilus maritimus (strain SCM1).